The following is a 372-amino-acid chain: Methenyltetrahydrofolate synthase domain-containing protein (372 aa).

Positions 246–258 are enriched in basic and acidic residues; that stretch reads KQAGKDVTLRDEP. The tract at residues 246–289 is disordered; the sequence is KQAGKDVTLRDEPGSQQPAPGPIRRPQDRPQTGSRGGSRSPLQG. Residues 296 to 369 enclose the RRM domain; sequence ATVCVGNLPF…NALRVSLGQQ (74 aa).

This chain is Methenyltetrahydrofolate synthase domain-containing protein (Mthfsd), found in Mus musculus (Mouse).